Consider the following 89-residue polypeptide: Acylphosphatase (89 aa).

The Acylphosphatase-like domain occupies 4–89 (SRRFLVSGTV…EQPPEGFRVL (86 aa)). Catalysis depends on residues arginine 19 and asparagine 37.

The protein belongs to the acylphosphatase family.

The catalysed reaction is an acyl phosphate + H2O = a carboxylate + phosphate + H(+). The sequence is that of Acylphosphatase (acyP) from Alkalilimnicola ehrlichii (strain ATCC BAA-1101 / DSM 17681 / MLHE-1).